A 364-amino-acid polypeptide reads, in one-letter code: Dihydroorotate dehydrogenase (quinone) (364 aa).

Residues 61-65 and Ser85 each bind FMN; that span reads AGFDK. Lys65 lines the substrate pocket. 110-114 provides a ligand contact to substrate; sequence NRMGF. Positions 139 and 170 each coordinate FMN. Position 170 (Asn170) interacts with substrate. Residue Ser173 is the Nucleophile of the active site. Residue Asn175 coordinates substrate. FMN is bound by residues Lys214 and Ser242. 243 to 244 contributes to the substrate binding site; the sequence is NT. Residues Gly266, Gly295, and 316–317 each bind FMN; that span reads YS.

It belongs to the dihydroorotate dehydrogenase family. Type 2 subfamily. As to quaternary structure, monomer. The cofactor is FMN.

Its subcellular location is the cell membrane. The catalysed reaction is (S)-dihydroorotate + a quinone = orotate + a quinol. Its pathway is pyrimidine metabolism; UMP biosynthesis via de novo pathway; orotate from (S)-dihydroorotate (quinone route): step 1/1. Catalyzes the conversion of dihydroorotate to orotate with quinone as electron acceptor. The chain is Dihydroorotate dehydrogenase (quinone) from Bradyrhizobium sp. (strain ORS 278).